Reading from the N-terminus, the 578-residue chain is Dystrotelin (578 aa).

Residues 223–279 (THPARCTLCRTFPITGLRYRCLKCLNFDICQMCFLSGLHSKSHQKSHPVIEHCIQMS) form a ZZ-type zinc finger. Zn(2+)-binding residues include C228, C231, C243, C246, C252, C255, H265, and H269. Residues 322-351 (HHAQARLLKKQLNQYKDKLQAIYTSQEERI) are a coiled coil. Residues 382-475 (RLQPPGPSSS…QSQTQKMPQK (94 aa)) are disordered. Composition is skewed to basic and acidic residues over residues 399–410 (KVDHSSTEKVPK) and 431–451 (PKLD…HALR). Positions 455 to 472 (SPETTLHSTRAQSQTQKM) are enriched in polar residues. Residues 503–537 (ALAAVEKKEAGNIKERKDELEEEELQELLSKLMDA) adopt a coiled-coil conformation.

Its subcellular location is the cell membrane. In Homo sapiens (Human), this protein is Dystrotelin (DYTN).